We begin with the raw amino-acid sequence, 336 residues long: PHD finger protein 11 (336 aa).

The interval 1–20 is disordered; sequence MAEETAPPCGPVSTGGSLSP. Residues 25–61 form a C2HC pre-PHD-type zinc finger; that stretch reads KRTCALCPDGHEWSVIYFAPSANIAAHENCLLYSSGL. Residues 91 to 143 form a PHD-type zinc finger; sequence LKCSLCNKGGATVGCDLSSCRKSYHYVCAKKDHAIPQVDEDLGTYKIFCPEHP. 2 disordered regions span residues 139–179 and 303–336; these read CPEH…KKMK and DPSGSTSGSLLPPEDHQCRCQESPEVQAGSGDSL. The span at 303–314 shows a compositional bias: low complexity; it reads DPSGSTSGSLLP.

As to quaternary structure, interacts with BRCA1 and RELA.

The protein resides in the nucleus. Its function is as follows. Positive regulator of Th1-type cytokine gene expression. The polypeptide is PHD finger protein 11 (Phf11) (Rattus norvegicus (Rat)).